We begin with the raw amino-acid sequence, 328 residues long: Reticulocalbin-3 (328 aa).

The first 20 residues, 1-20 (MMWRWSFLLLLLLLRHWALG), serve as a signal peptide directing secretion. The tract at residues 24–48 (PDAGPHGQDRVHHGTPLSEAPHDDA) is disordered. 6 EF-hand domains span residues 77 to 112 (QARL…TQQR), 113 to 148 (HIRD…HYEP), 163 to 198 (KMLA…EEFP), 200 to 235 (MRDI…EEPG), 241 to 276 (WVQT…PSQD), and 277 to 312 (QPLV…FVGS). Ca(2+) is bound by residues D92, D94, W96, E101, D126, D128, D130, R132, and E137. An N-linked (GlcNAc...) asparagine glycan is attached at N140. The Ca(2+) site is built by D176, D178, D180, M182, E187, D213, N215, D217, Y219, E224, D254, N256, D258, R260, E265, D290, D292, D294, R296, and E301. The Prevents secretion from ER motif lies at 325–328 (HDEL).

The protein belongs to the CREC family. In terms of assembly, interacts with PCSK6 (immature form including the propeptide); probably involved in the maturation and the secretion of PCSK6. In terms of processing, degraded by PCSK6 and other endoproteases including FURIN and PCSK5. Post-translationally, N-glycosylated. In terms of tissue distribution, highly expressed in lung and heart. Also detected in liver, spleen, kidney, skeletal muscle, intestine, stomach, and brain.

It is found in the endoplasmic reticulum lumen. In terms of biological role, probable molecular chaperone assisting protein biosynthesis and transport in the endoplasmic reticulum. Required for the proper biosynthesis and transport of pulmonary surfactant-associated protein A/SP-A, pulmonary surfactant-associated protein D/SP-D and the lipid transporter ABCA3. By regulating both the proper expression and the degradation through the endoplasmic reticulum-associated protein degradation pathway of these proteins plays a crucial role in pulmonary surfactant homeostasis. Has an anti-fibrotic activity by negatively regulating the secretion of type I and type III collagens. This calcium-binding protein also transiently associates with immature PCSK6 and regulates its secretion. The chain is Reticulocalbin-3 from Mus musculus (Mouse).